A 430-amino-acid chain; its full sequence is Ribosomal protein uS12 methylthiotransferase RimO (430 aa).

The 118-residue stretch at 2–119 (ISVYSISLGC…WPAMLAHALK (118 aa)) folds into the MTTase N-terminal domain. Cys11, Cys46, Cys81, Cys145, Cys149, and Cys152 together coordinate [4Fe-4S] cluster. In terms of domain architecture, Radical SAM core spans 131 to 361 (STGPSYAWLK…MEVQAEISEE (231 aa)). A TRAM domain is found at 364–430 (AVHEGTRQQV…TRTYDLVALV (67 aa)).

It belongs to the methylthiotransferase family. RimO subfamily. [4Fe-4S] cluster is required as a cofactor.

It is found in the cytoplasm. It carries out the reaction L-aspartate(89)-[ribosomal protein uS12]-hydrogen + (sulfur carrier)-SH + AH2 + 2 S-adenosyl-L-methionine = 3-methylsulfanyl-L-aspartate(89)-[ribosomal protein uS12]-hydrogen + (sulfur carrier)-H + 5'-deoxyadenosine + L-methionine + A + S-adenosyl-L-homocysteine + 2 H(+). Catalyzes the methylthiolation of an aspartic acid residue of ribosomal protein uS12. This chain is Ribosomal protein uS12 methylthiotransferase RimO, found in Nitratidesulfovibrio vulgaris (strain DP4) (Desulfovibrio vulgaris).